Here is a 911-residue protein sequence, read N- to C-terminus: Probable 2-oxoadipate dehydrogenase complex component E1 homolog (911 aa).

This sequence belongs to the alpha-ketoglutarate dehydrogenase family. It depends on thiamine diphosphate as a cofactor.

The protein localises to the mitochondrion. The enzyme catalyses N(6)-[(R)-lipoyl]-L-lysyl-[protein] + 2-oxoadipate + H(+) = N(6)-[(R)-S(8)-glutaryldihydrolipoyl]-L-lysyl-[protein] + CO2. 2-oxoadipate dehydrogenase (E1a) component of the 2-oxoadipate dehydrogenase complex (OADHC). Participates in the first step, rate limiting for the overall conversion of 2-oxoadipate (alpha-ketoadipate) to glutaryl-CoA and CO(2) catalyzed by the whole OADHC. Catalyzes the irreversible decarboxylation of 2-oxoadipate via the thiamine diphosphate (ThDP) cofactor and subsequent transfer of the decarboxylated acyl intermediate on an oxidized dihydrolipoyl group that is covalently amidated to the E2 enzyme (dihydrolipoyllysine-residue succinyltransferase or DLST). In Caenorhabditis elegans, this protein is Probable 2-oxoadipate dehydrogenase complex component E1 homolog.